The following is a 606-amino-acid chain: Zinc metalloproteinase-disintegrin-like HF3 (606 aa).

Residues Met1–Ser20 form the signal peptide. Positions Ile21–Ala190 are excised as a propeptide. The Peptidase M12B domain occupies Lys199–Pro395. Glu202 is a Ca(2+) binding site. Residue Asn259 is glycosylated (N-linked (GlcNAc...) asparagine). A Ca(2+)-binding site is contributed by Asp286. 3 cysteine pairs are disulfide-bonded: Cys310-Cys390, Cys350-Cys374, and Cys352-Cys357. N-linked (GlcNAc...) asparagine glycosylation occurs at Asn313. His335 contributes to the Zn(2+) binding site. Residue Glu336 is part of the active site. His339 and His345 together coordinate Zn(2+). Asn373 carries an N-linked (GlcNAc...) asparagine glycan. Positions 390, 393, 405, 408, 410, 412, 415, and 418 each coordinate Ca(2+). Residues Pro403 to Asn489 enclose the Disintegrin domain. Intrachain disulfides connect Cys406–Cys435, Cys417–Cys430, Cys419–Cys425, Cys429–Cys452, Cys443–Cys449, Cys448–Cys474, Cys461–Cys481, Cys468–Cys500, Cys493–Cys505, Cys512–Cys562, Cys527–Cys569, Cys540–Cys550, Cys557–Cys594, and Cys588–Cys599. The short motif at Glu467–Asp469 is the D/ECD-tripeptide element. 3 residues coordinate Ca(2+): Asp469, Glu472, and Asp484. The N-linked (GlcNAc...) asparagine glycan is linked to Asn519. Asn584 carries N-linked (GlcNAc...) asparagine glycosylation.

This sequence belongs to the venom metalloproteinase (M12B) family. P-III subfamily. P-IIIa sub-subfamily. Monomer. Zn(2+) is required as a cofactor. In terms of tissue distribution, expressed by the venom gland.

Its subcellular location is the secreted. The metalloproteinase-disintegrin-like HF3 is a potent hemorrhagic toxin that activates macrophages for phagocytosis through integrin alpha-M/beta-2 (ITGAM/ITGB2). It inhibits collagen-induced platelet aggregation. This protein shows cleavage specificity for substrate for leucine at P1' position, followed by hydrophobic residues in P2'. This is Zinc metalloproteinase-disintegrin-like HF3 from Bothrops jararaca (Jararaca).